A 201-amino-acid polypeptide reads, in one-letter code: Prostamide/prostaglandin F synthase (201 aa).

This sequence belongs to the peroxiredoxin-like PRXL2 family. Prostamide/prostaglandin F synthase subfamily.

The protein localises to the cytoplasm. It localises to the cytosol. The enzyme catalyses prostaglandin H2 + [thioredoxin]-dithiol = prostaglandin F2alpha + [thioredoxin]-disulfide. The catalysed reaction is prostamide F2alpha + [thioredoxin]-disulfide = prostamide H2 + [thioredoxin]-dithiol. Functionally, catalyzes the reduction of prostaglandin-ethanolamide H(2) (prostamide H(2)) to prostamide F(2alpha) with NADPH as proton donor. Also able to reduce prostaglandin H(2) to prostaglandin F(2alpha). This Aquarana catesbeiana (American bullfrog) protein is Prostamide/prostaglandin F synthase (prxl2b).